Reading from the N-terminus, the 365-residue chain is Chorismate synthase (365 aa).

R48 lines the NADP(+) pocket. FMN contacts are provided by residues 130–132, 242–243, G290, 305–309, and R331; these read RSS, NA, and KPTSS.

It belongs to the chorismate synthase family. Homotetramer. It depends on FMNH2 as a cofactor.

It catalyses the reaction 5-O-(1-carboxyvinyl)-3-phosphoshikimate = chorismate + phosphate. It functions in the pathway metabolic intermediate biosynthesis; chorismate biosynthesis; chorismate from D-erythrose 4-phosphate and phosphoenolpyruvate: step 7/7. Its function is as follows. Catalyzes the anti-1,4-elimination of the C-3 phosphate and the C-6 proR hydrogen from 5-enolpyruvylshikimate-3-phosphate (EPSP) to yield chorismate, which is the branch point compound that serves as the starting substrate for the three terminal pathways of aromatic amino acid biosynthesis. This reaction introduces a second double bond into the aromatic ring system. This Erythrobacter litoralis (strain HTCC2594) protein is Chorismate synthase.